A 363-amino-acid chain; its full sequence is Phosphoserine aminotransferase (363 aa).

L-glutamate is bound at residue arginine 42. Pyridoxal 5'-phosphate is bound by residues 76-77, tryptophan 102, threonine 156, aspartate 175, and glutamine 198; that span reads GR. The residue at position 199 (lysine 199) is an N6-(pyridoxal phosphate)lysine. 240–241 contributes to the pyridoxal 5'-phosphate binding site; it reads NT.

The protein belongs to the class-V pyridoxal-phosphate-dependent aminotransferase family. SerC subfamily. In terms of assembly, homodimer. It depends on pyridoxal 5'-phosphate as a cofactor.

The protein resides in the cytoplasm. It catalyses the reaction O-phospho-L-serine + 2-oxoglutarate = 3-phosphooxypyruvate + L-glutamate. The catalysed reaction is 4-(phosphooxy)-L-threonine + 2-oxoglutarate = (R)-3-hydroxy-2-oxo-4-phosphooxybutanoate + L-glutamate. It functions in the pathway amino-acid biosynthesis; L-serine biosynthesis; L-serine from 3-phospho-D-glycerate: step 2/3. The protein operates within cofactor biosynthesis; pyridoxine 5'-phosphate biosynthesis; pyridoxine 5'-phosphate from D-erythrose 4-phosphate: step 3/5. In terms of biological role, catalyzes the reversible conversion of 3-phosphohydroxypyruvate to phosphoserine and of 3-hydroxy-2-oxo-4-phosphonooxybutanoate to phosphohydroxythreonine. This is Phosphoserine aminotransferase from Shewanella baltica (strain OS185).